We begin with the raw amino-acid sequence, 195 residues long: Imidazoleglycerol-phosphate dehydratase (195 aa).

Belongs to the imidazoleglycerol-phosphate dehydratase family.

It localises to the cytoplasm. The catalysed reaction is D-erythro-1-(imidazol-4-yl)glycerol 3-phosphate = 3-(imidazol-4-yl)-2-oxopropyl phosphate + H2O. It functions in the pathway amino-acid biosynthesis; L-histidine biosynthesis; L-histidine from 5-phospho-alpha-D-ribose 1-diphosphate: step 6/9. The chain is Imidazoleglycerol-phosphate dehydratase from Thermotoga petrophila (strain ATCC BAA-488 / DSM 13995 / JCM 10881 / RKU-1).